The following is a 274-amino-acid chain: Small nuclear ribonucleoprotein-associated protein B (274 aa).

Positions 5-85 (PKSSKMLQYI…VVSMSVEAPP (81 aa)) constitute a Sm domain. A disordered region spans residues 148 to 274 (PGGGVPPPMG…PMGRGGFQRK (127 aa)). The stretch at 162–171 (PPQGFPPGGP) is repeat 1. Residues 162 to 265 (PPQGFPPGGP…PPQGFPPGGP (104 aa)) form a 6 X 10 AA repeats of P-P-Q-G-F-P-P-G-G-P region. Low complexity predominate over residues 173–187 (PQGAFNNNPNNNNGG). A run of 5 repeats spans residues 188 to 197 (PPQGFPPGGP), 204 to 213 (PPQGFPPGGP), 225 to 234 (PPQGFPPGGP), 241 to 250 (PPQGFPPGGP), and 256 to 265 (PPQGFPPGGP). Residues 216–226 (GPNLNNGNMPP) are compositionally biased toward low complexity. Positions 265-274 (PMGRGGFQRK) are enriched in gly residues.

Belongs to the snRNP SmB/SmN family.

The protein localises to the cytoplasm. It localises to the cytosol. The protein resides in the nucleus. Plays a role in pre-mRNA splicing as a core component of the spliceosomal U1, U2, U4 and U5 small nuclear ribonucleoproteins (snRNPs), the building blocks of the spliceosome. This chain is Small nuclear ribonucleoprotein-associated protein B (snrpb), found in Dictyostelium discoideum (Social amoeba).